The sequence spans 449 residues: Galactosyl transferase CpsE (449 aa).

A run of 5 helical transmembrane segments spans residues 5-22 (VVVYFSASLTLTLITPNF), 27-46 (DLLFVLLIHYIVFYLSDFYR), 59-78 (MVLKYSFYYIFISSSLFFIF), 88-107 (SFFTFIAMNSILLYLLNSFL), and 258-280 (FLDITGAIIGLLICGIVAIFLVP).

This sequence belongs to the bacterial sugar transferase family.

The protein localises to the cell membrane. Galactosyl transferase is essential for the assembly of the group B streptococci (GBS) type III capsular polysaccharide. May be involved in the formation of either or both galactosidic bonds by catalyzing the addition of galactose to an oligosaccharide precursor or to a lipid intermediate. Type III capsular polysaccharide consists of a linear backbone with short side chains ending in residues of N-acetylneuraminic acid or sialic acid. The presence of sialic acid on the surface of the organism inhibits activation of the alternative pathway of complement and is thought to be an important element in the virulence function of the capsule. This Streptococcus agalactiae serotype III (strain NEM316) protein is Galactosyl transferase CpsE (cpsE).